We begin with the raw amino-acid sequence, 440 residues long: Cytochrome b (440 aa).

A helical transmembrane segment spans residues Ile-46 to Val-66. His-97 and His-111 together coordinate heme b. 9 helical membrane-spanning segments follow: residues Gly-100 to Ser-120, Trp-129 to Leu-149, Phe-156 to Ile-176, Phe-194 to Trp-214, Leu-253 to Tyr-273, Trp-296 to Val-315, Phe-330 to Asp-350, Trp-365 to Ala-385, and Leu-394 to Ile-414. Positions 198 and 212 each coordinate heme b.

This sequence belongs to the cytochrome b family. The main subunits of complex b-c1 are: cytochrome b, cytochrome c1 and the Rieske protein. It depends on heme b as a cofactor.

The protein resides in the cell membrane. Functionally, component of the ubiquinol-cytochrome c reductase complex (complex III or cytochrome b-c1 complex), which is a respiratory chain that generates an electrochemical potential coupled to ATP synthesis. The sequence is that of Cytochrome b (petB) from Paracoccus denitrificans.